A 226-amino-acid polypeptide reads, in one-letter code: Glutathione S-transferase-like protein gedE (226 aa).

The GST N-terminal domain occupies L4–H85. The GST C-terminal domain maps to D92 to S226.

It belongs to the GST superfamily.

Its pathway is secondary metabolite biosynthesis. Its function is as follows. Glutathione S-transferase-like protein; part of the gene cluster that mediates the biosynthesis of geodin, an intermediate in the biosynthesis of other natural products. The pathway begins with the synthesis of atrochrysone thioester by the polyketide synthase (PKS) gedC. The atrochrysone carboxyl ACP thioesterase gedB then breaks the thioester bond and releases the atrochrysone carboxylic acid from gedC. The atrochrysone carboxylic acid is then converted to atrochrysone which is further transformed into emodinanthrone. The next step is performed by the emodinanthrone oxygenase gedH that catalyzes the oxidation of emodinanthrone to emodin. Emodin O-methyltransferase encoded probably by gedA then catalyzes methylation of the 8-hydroxy group of emodin to form questin. Ring cleavage of questin by questin oxidase gedK leads to desmethylsulochrin via several intermediates including questin epoxide. Another methylation step probably catalyzed by methyltransferase gedG leads to the formation of sulochrin which is further converted to dihydrogeodin by the sulochrin halogenase gedL. Finally, the dihydrogeodin oxidase gedJ catalyzes the stereospecific phenol oxidative coupling reaction converting dihydrogeodin to geodin. The polypeptide is Glutathione S-transferase-like protein gedE (Aspergillus terreus (strain NIH 2624 / FGSC A1156)).